A 226-amino-acid polypeptide reads, in one-letter code: Thymidylate kinase (226 aa).

Position 20–27 (glycine 20–serine 27) interacts with ATP.

This sequence belongs to the thymidylate kinase family.

The enzyme catalyses dTMP + ATP = dTDP + ADP. Phosphorylation of dTMP to form dTDP in both de novo and salvage pathways of dTTP synthesis. This is Thymidylate kinase from Bradyrhizobium sp. (strain ORS 278).